Reading from the N-terminus, the 324-residue chain is MIDELIERMKKGDRRATARLITLVENDEEKAREIIRKIYPLTGNAYIVGITGPPGAGKSTLLDKLIKEARKEGLIVGVIAIDPTSPFTGGALLGDRIRMQRHSTDPGVFIRSMATRGSLGGLAKATNDAIKVLDAYGCDVIFVETVGVGQVEVDIVKTADTVVLVTVPGLGDDVQTIKAGLMEIADIFVINKADKEGADATYFELNLALDLESDKWRELGWRPPVVETVATMNKGIKELWDKIKEHREFLERSGRLKEKRRKRIEEEIKTIVSGIIAGKVEASIKRGEFEEIIRRVSQKDIDPYSAADMILKEIIGGGLSVQEN.

Residues 52–60 (GPPGAGKST), Asp-194, and 229–231 (VAT) contribute to the GTP site.

This sequence belongs to the SIMIBI class G3E GTPase family. ArgK/MeaB subfamily.

Functionally, may have GTPase activity. May also bind and hydrolyze ATP. May function as chaperone. This chain is Putative GTPase PYRAB02490, found in Pyrococcus abyssi (strain GE5 / Orsay).